A 255-amino-acid chain; its full sequence is tRNA (guanine-N(7)-)-methyltransferase (255 aa).

The tract at residues 1–37 (MTAAASDPHNPRSSADDTASPRCESGQGSFFGRRKGH) is disordered. S-adenosyl-L-methionine-binding residues include glutamate 80, glutamate 105, aspartate 132, and aspartate 154. Aspartate 154 is an active-site residue. Residues lysine 158 and aspartate 190 each contribute to the substrate site.

The protein belongs to the class I-like SAM-binding methyltransferase superfamily. TrmB family.

The catalysed reaction is guanosine(46) in tRNA + S-adenosyl-L-methionine = N(7)-methylguanosine(46) in tRNA + S-adenosyl-L-homocysteine. Its pathway is tRNA modification; N(7)-methylguanine-tRNA biosynthesis. Its function is as follows. Catalyzes the formation of N(7)-methylguanine at position 46 (m7G46) in tRNA. This chain is tRNA (guanine-N(7)-)-methyltransferase, found in Nitrobacter hamburgensis (strain DSM 10229 / NCIMB 13809 / X14).